The primary structure comprises 298 residues: MALDKDIVGSIEFLEVVGLQGSTYLLKGPNDESVKLNQSEVADEDDFEIGEEYSFFVYPNRSGDLFATQNMPDITKDKYDFAKVIKTDRDGVHIDVGLPREVLVPWEDLPKLKELWPQAGDYLLVTLRIDSTNQMFGRLASETIVESMFTPVNDDSKQNEYISARAYRLLRVGSFLLSNEGYKIFVHESERKHEPRLGEEVEVRIIGHNEKGELNGSFLPLAHERLDDDGQVIFDLLVEYDGELPFWDKSSPDAIKEVFNMSKGSFKRAIGHLYKKKIINIETGKITLTKKGWSRVDD.

The protein belongs to the CvfB family.

In Staphylococcus epidermidis (strain ATCC 35984 / DSM 28319 / BCRC 17069 / CCUG 31568 / BM 3577 / RP62A), this protein is Conserved virulence factor B (cvfB).